A 232-amino-acid polypeptide reads, in one-letter code: Enolase-phosphatase E1 (232 aa).

This sequence belongs to the HAD-like hydrolase superfamily. MasA/MtnC family. As to quaternary structure, monomer. The cofactor is Mg(2+).

It catalyses the reaction 5-methylsulfanyl-2,3-dioxopentyl phosphate + H2O = 1,2-dihydroxy-5-(methylsulfanyl)pent-1-en-3-one + phosphate. The protein operates within amino-acid biosynthesis; L-methionine biosynthesis via salvage pathway; L-methionine from S-methyl-5-thio-alpha-D-ribose 1-phosphate: step 3/6. It functions in the pathway amino-acid biosynthesis; L-methionine biosynthesis via salvage pathway; L-methionine from S-methyl-5-thio-alpha-D-ribose 1-phosphate: step 4/6. Functionally, bifunctional enzyme that catalyzes the enolization of 2,3-diketo-5-methylthiopentyl-1-phosphate (DK-MTP-1-P) into the intermediate 2-hydroxy-3-keto-5-methylthiopentenyl-1-phosphate (HK-MTPenyl-1-P), which is then dephosphorylated to form the acireductone 1,2-dihydroxy-3-keto-5-methylthiopentene (DHK-MTPene). The chain is Enolase-phosphatase E1 from Sorangium cellulosum (strain So ce56) (Polyangium cellulosum (strain So ce56)).